A 130-amino-acid polypeptide reads, in one-letter code: Small ribosomal subunit protein uS11 (130 aa).

The protein belongs to the universal ribosomal protein uS11 family. As to quaternary structure, part of the 30S ribosomal subunit. Interacts with proteins S7 and S18. Binds to IF-3.

Located on the platform of the 30S subunit, it bridges several disparate RNA helices of the 16S rRNA. Forms part of the Shine-Dalgarno cleft in the 70S ribosome. The chain is Small ribosomal subunit protein uS11 from Dehalococcoides mccartyi (strain ATCC BAA-2100 / JCM 16839 / KCTC 5957 / BAV1).